The chain runs to 486 residues: Histidine--tRNA ligase, chloroplastic/mitochondrial (486 aa).

Belongs to the class-II aminoacyl-tRNA synthetase family.

The protein localises to the plastid. It localises to the chloroplast. It is found in the mitochondrion. The catalysed reaction is tRNA(His) + L-histidine + ATP = L-histidyl-tRNA(His) + AMP + diphosphate + H(+). The polypeptide is Histidine--tRNA ligase, chloroplastic/mitochondrial (Arabidopsis thaliana (Mouse-ear cress)).